A 379-amino-acid chain; its full sequence is MDTAWFIGFMVVIGAVIGGATNSLAIKMLFRPYTEKRIGKWRVPFTPGLIPKRHQELAIQLGHMVVHYLLTAEGLGKKLKSAVFMKAMNDWLSTELLKLLRSELTIGELLEDKLGVKEPKQTLLQKTEGLIEKSYDRFFQENRYKQIGEVLPRGVNEKIDHSVPVIAAFLLERGQALFSSEEGKERLSKMIDRFLLNKGTLGNMISMFLGNERLVDKLQPELMKFMRDDGTKRMVEEILEKEWAKLKQKDVALIEDQLNKEDIVEYMTTALEKNVTFYQWVDQPLCDWSEPFEDMLVINWVPKLVDAVSDLLALHLEGLLEKLNLEDIVREQVEAFSVERLEELVLTISKREFKMITYLGALLGGMIGFIQGLLVLFIG.

The next 2 membrane-spanning stretches (helical) occupy residues 6 to 26 (FIGFMVVIGAVIGGATNSLAI) and 359 to 379 (LGALLGGMIGFIQGLLVLFIG).

This sequence belongs to the UPF0754 family.

It is found in the cell membrane. The chain is UPF0754 protein BpOF4_11355 from Alkalihalophilus pseudofirmus (strain ATCC BAA-2126 / JCM 17055 / OF4) (Bacillus pseudofirmus).